The sequence spans 384 residues: S-adenosylmethionine synthase (384 aa).

His-15 lines the ATP pocket. Asp-17 contacts Mg(2+). Glu-43 lines the K(+) pocket. Positions 56 and 99 each coordinate L-methionine. Residues 99 to 109 form a flexible loop region; it reads QSSDINQGVDR. ATP contacts are provided by residues 164 to 166, 230 to 231, Asp-239, 245 to 246, Ala-262, and Lys-266; these read DAK, RF, and RK. Residue Asp-239 coordinates L-methionine. Residue Lys-270 participates in L-methionine binding.

It belongs to the AdoMet synthase family. Homotetramer; dimer of dimers. Requires Mg(2+) as cofactor. The cofactor is K(+).

The protein resides in the cytoplasm. The enzyme catalyses L-methionine + ATP + H2O = S-adenosyl-L-methionine + phosphate + diphosphate. It participates in amino-acid biosynthesis; S-adenosyl-L-methionine biosynthesis; S-adenosyl-L-methionine from L-methionine: step 1/1. Functionally, catalyzes the formation of S-adenosylmethionine (AdoMet) from methionine and ATP. The overall synthetic reaction is composed of two sequential steps, AdoMet formation and the subsequent tripolyphosphate hydrolysis which occurs prior to release of AdoMet from the enzyme. The chain is S-adenosylmethionine synthase from Histophilus somni (strain 129Pt) (Haemophilus somnus).